Here is a 322-residue protein sequence, read N- to C-terminus: Cytochrome f (322 aa).

The signal sequence occupies residues 1–35 (MQNRNIFSWVKEQTTRSISVSIMILIYVITWTSIS). Positions 38, 58, 61, and 62 each coordinate heme. The chain crosses the membrane as a helical span at residues 288–308 (VQGLFFFFASVILAQIFLVLK).

This sequence belongs to the cytochrome f family. In terms of assembly, the 4 large subunits of the cytochrome b6-f complex are cytochrome b6, subunit IV (17 kDa polypeptide, petD), cytochrome f and the Rieske protein, while the 4 small subunits are PetG, PetL, PetM and PetN. The complex functions as a dimer. Heme is required as a cofactor.

The protein resides in the plastid. Its subcellular location is the chloroplast thylakoid membrane. Its function is as follows. Component of the cytochrome b6-f complex, which mediates electron transfer between photosystem II (PSII) and photosystem I (PSI), cyclic electron flow around PSI, and state transitions. The sequence is that of Cytochrome f from Nandina domestica (Heavenly bamboo).